The sequence spans 297 residues: Large ribosomal subunit protein uL18 (297 aa).

This sequence belongs to the universal ribosomal protein uL18 family. As to quaternary structure, component of the large ribosomal subunit (LSU).

It localises to the cytoplasm. The protein localises to the nucleus. Functionally, component of the ribosome, a large ribonucleoprotein complex responsible for the synthesis of proteins in the cell. The small ribosomal subunit (SSU) binds messenger RNAs (mRNAs) and translates the encoded message by selecting cognate aminoacyl-transfer RNA (tRNA) molecules. The large subunit (LSU) contains the ribosomal catalytic site termed the peptidyl transferase center (PTC), which catalyzes the formation of peptide bonds, thereby polymerizing the amino acids delivered by tRNAs into a polypeptide chain. The nascent polypeptides leave the ribosome through a tunnel in the LSU and interact with protein factors that function in enzymatic processing, targeting, and the membrane insertion of nascent chains at the exit of the ribosomal tunnel. The sequence is that of Large ribosomal subunit protein uL18 (RpL5) from Lysiphlebus testaceipes (Greenbugs aphid parastoid).